A 337-amino-acid polypeptide reads, in one-letter code: Probable RuBisCO transcriptional regulator (337 aa).

Residues 6 to 63 (FTLDQLRILKAIAVEGSFKRAADSLYVSQPAVSLQVQNLERQLDVPLFDRGGRRAQLT) enclose the HTH lysR-type domain. A DNA-binding region (H-T-H motif) is located at residues 23 to 42 (FKRAADSLYVSQPAVSLQVQ).

The protein belongs to the LysR transcriptional regulatory family.

In terms of biological role, trans-acting transcriptional regulator of RuBisCO genes (rbcL and rbcS) expression. The protein is Probable RuBisCO transcriptional regulator (rbcR) of Nostoc sp. (strain PCC 7120 / SAG 25.82 / UTEX 2576).